Consider the following 921-residue polypeptide: Eukaryotic translation initiation factor 3 subunit A (921 aa).

One can recognise a PCI domain in the interval F319–F493. Residues G497–E524 form a disordered region. Residues D506 to T517 are compositionally biased toward basic and acidic residues. 2 coiled-coil regions span residues A562–T647 and E693–N868. Residues A818–I865 show a composition bias toward basic and acidic residues. A disordered region spans residues A818–A921. Residues P873 to R890 are compositionally biased toward pro residues. Basic and acidic residues predominate over residues P903–M913.

The protein belongs to the eIF-3 subunit A family. As to quaternary structure, component of the eukaryotic translation initiation factor 3 (eIF-3) complex.

Its subcellular location is the cytoplasm. Functionally, RNA-binding component of the eukaryotic translation initiation factor 3 (eIF-3) complex, which is involved in protein synthesis of a specialized repertoire of mRNAs and, together with other initiation factors, stimulates binding of mRNA and methionyl-tRNAi to the 40S ribosome. The eIF-3 complex specifically targets and initiates translation of a subset of mRNAs involved in cell proliferation. This Eremothecium gossypii (strain ATCC 10895 / CBS 109.51 / FGSC 9923 / NRRL Y-1056) (Yeast) protein is Eukaryotic translation initiation factor 3 subunit A.